Consider the following 89-residue polypeptide: Small ribosomal subunit protein uS15 (89 aa).

Basic and acidic residues predominate over residues 1-20 (MSITAERKAELIKTHARGEA). The segment at 1–24 (MSITAERKAELIKTHARGEADTGS) is disordered.

Belongs to the universal ribosomal protein uS15 family. As to quaternary structure, part of the 30S ribosomal subunit. Forms a bridge to the 50S subunit in the 70S ribosome, contacting the 23S rRNA.

One of the primary rRNA binding proteins, it binds directly to 16S rRNA where it helps nucleate assembly of the platform of the 30S subunit by binding and bridging several RNA helices of the 16S rRNA. In terms of biological role, forms an intersubunit bridge (bridge B4) with the 23S rRNA of the 50S subunit in the ribosome. The sequence is that of Small ribosomal subunit protein uS15 from Phenylobacterium zucineum (strain HLK1).